Here is a 428-residue protein sequence, read N- to C-terminus: Serine--tRNA ligase (428 aa).

Residue 231-233 (TAE) participates in L-serine binding. 262–264 (RSE) is a binding site for ATP. Glu285 provides a ligand contact to L-serine. Residue 349-352 (EISS) participates in ATP binding. Ser385 lines the L-serine pocket.

This sequence belongs to the class-II aminoacyl-tRNA synthetase family. Type-1 seryl-tRNA synthetase subfamily. Homodimer. The tRNA molecule binds across the dimer.

It is found in the cytoplasm. It carries out the reaction tRNA(Ser) + L-serine + ATP = L-seryl-tRNA(Ser) + AMP + diphosphate + H(+). The enzyme catalyses tRNA(Sec) + L-serine + ATP = L-seryl-tRNA(Sec) + AMP + diphosphate + H(+). Its pathway is aminoacyl-tRNA biosynthesis; selenocysteinyl-tRNA(Sec) biosynthesis; L-seryl-tRNA(Sec) from L-serine and tRNA(Sec): step 1/1. Its function is as follows. Catalyzes the attachment of serine to tRNA(Ser). Is also able to aminoacylate tRNA(Sec) with serine, to form the misacylated tRNA L-seryl-tRNA(Sec), which will be further converted into selenocysteinyl-tRNA(Sec). In Staphylococcus aureus (strain Mu3 / ATCC 700698), this protein is Serine--tRNA ligase.